We begin with the raw amino-acid sequence, 524 residues long: Serine/threonine-protein kinase PAK 2 (524 aa).

The disordered stretch occupies residues 1-81 (MSDNGELEDK…PEISPPSDFE (81 aa)). Ser-2 carries the post-translational modification N-acetylserine. Phosphoserine occurs at positions 2, 20, 55, and 58. Thr-60 is modified (phosphothreonine). Residue Lys-62 is modified to N6-acetyllysine. Position 64 is a phosphoserine (Ser-64). Over residues 67–81 (KEKERPEISPPSDFE) the composition is skewed to basic and acidic residues. The segment at 69-112 (KERPEISPPSDFEHTIHVGFDAVTGEFTGMPEQWARLLQTSNIT) is GTPase-binding. Residues 69 to 137 (KERPEISPPS…KFYDSNTVKQ (69 aa)) form an autoregulatory region region. The CRIB domain maps to 74–87 (ISPPSDFEHTIHVG). The linker stretch occupies residues 88–248 (FDAVTGEFTG…IVSIGDPKKK (161 aa)). Lys-128 carries the post-translational modification N6-acetyllysine. Phosphothreonine is present on Thr-134. The residue at position 139 (Tyr-139) is a Phosphotyrosine. A Phosphoserine modification is found at Ser-141. A Phosphothreonine modification is found at Thr-143. A Phosphoserine modification is found at Ser-152. Phosphothreonine occurs at positions 159 and 169. Acidic residues predominate over residues 169-178 (TEEDDDDEEA). Positions 169–188 (TEEDDDDEEAAPPVIAPRPD) are disordered. A Phosphoserine modification is found at Ser-197. The interval 204–228 (APVGDSHVDSGAKSSDKQKKKTKMT) is disordered. The span at 209–228 (SHVDSGAKSSDKQKKKTKMT) shows a compositional bias: basic and acidic residues. The Nuclear localization signal motif lies at 245–251 (PKKKYTR). Residues 249–500 (YTRYEKIGQG…AKELLQHPFL (252 aa)) enclose the Protein kinase domain. Residues 255 to 263 (IGQGASGTV) and Lys-278 each bind ATP. Asp-368 acts as the Proton acceptor in catalysis. Phosphothreonine; by autocatalysis is present on Thr-402.

In terms of assembly, interacts tightly with GTP-bound but not GDP-bound CDC42/p21 and RAC1. Interacts with SH3MD4. Interacts with SCRIB. Interacts with ARHGEF7 and GIT1. PAK-2p34 interacts with ARHGAP10. Interacts with RAC1. In terms of processing, full-length PAK2 is autophosphorylated when activated by CDC42/p21. Following cleavage, both peptides, PAK-2p27 and PAK-2p34, become highly autophosphorylated. Autophosphorylation of PAK-2p27 can occur in the absence of any effectors and is dependent on phosphorylation of Thr-402, because PAK-2p27 is acting as an exogenous substrate. Post-translationally, during apoptosis proteolytically cleaved by caspase-3 or caspase-3-like proteases to yield active PAK-2p34. Ubiquitinated, leading to its proteasomal degradation.

The protein localises to the cytoplasm. Its subcellular location is the nucleus. It localises to the perinuclear region. The protein resides in the membrane. The enzyme catalyses L-seryl-[protein] + ATP = O-phospho-L-seryl-[protein] + ADP + H(+). It catalyses the reaction L-threonyl-[protein] + ATP = O-phospho-L-threonyl-[protein] + ADP + H(+). With respect to regulation, activated by binding small G proteins. Binding of GTP-bound CDC42 or RAC1 to the autoregulatory region releases monomers from the autoinhibited dimer, enables phosphorylation of Thr-402 and allows the kinase domain to adopt an active structure. Following caspase cleavage, autophosphorylated PAK-2p34 is constitutively active. Functionally, serine/threonine protein kinase that plays a role in a variety of different signaling pathways including cytoskeleton regulation, cell motility, cell cycle progression, apoptosis or proliferation. Acts as a downstream effector of the small GTPases CDC42 and RAC1. Activation by the binding of active CDC42 and RAC1 results in a conformational change and a subsequent autophosphorylation on several serine and/or threonine residues. Full-length PAK2 stimulates cell survival and cell growth. Phosphorylates MAPK4 and MAPK6 and activates the downstream target MAPKAPK5, a regulator of F-actin polymerization and cell migration. Phosphorylates JUN and plays an important role in EGF-induced cell proliferation. Phosphorylates many other substrates including histone H4 to promote assembly of H3.3 and H4 into nucleosomes, BAD, ribosomal protein S6, or MBP. Phosphorylates CASP7, thereby preventing its activity. Additionally, associates with ARHGEF7 and GIT1 to perform kinase-independent functions such as spindle orientation control during mitosis. On the other hand, apoptotic stimuli such as DNA damage lead to caspase-mediated cleavage of PAK2, generating PAK-2p34, an active p34 fragment that translocates to the nucleus and promotes cellular apoptosis involving the JNK signaling pathway. Caspase-activated PAK2 phosphorylates MKNK1 and reduces cellular translation. The polypeptide is Serine/threonine-protein kinase PAK 2 (PAK2) (Oryctolagus cuniculus (Rabbit)).